Here is a 527-residue protein sequence, read N- to C-terminus: Catalase (527 aa).

The segment covering 1-22 has biased composition (basic and acidic residues); it reads MADSRDPASDQMKQWKEQRAPQ. The tract at residues 1–34 is disordered; it reads MADSRDPASDQMKQWKEQRAPQKPDVLTTGGGNP. An N-acetylalanine modification is found at A2. S9 carries the phosphoserine modification. K13 carries the N6-succinyllysine modification. Active-site residues include H75 and N148. NADP(+) is bound by residues H194, S201, R203, and N213. An N6-succinyllysine modification is found at K221. K233 carries the post-translational modification N6-acetyllysine. 4 residues coordinate NADP(+): K237, W303, H305, and K306. N6-acetyllysine; alternate is present on K306. K306 carries the post-translational modification N6-succinyllysine; alternate. Residue Y358 coordinates heme. 2 positions are modified to phosphoserine: S417 and S434. N6-acetyllysine; alternate occurs at positions 449 and 480. Residues K449 and K480 each carry the N6-succinyllysine; alternate modification. At T511 the chain carries Phosphothreonine. Residue S517 is modified to Phosphoserine. The residue at position 522 (K522) is an N6-succinyllysine. Residues 524 to 527 carry the Microbody targeting signal; atypical motif; it reads KANL.

The protein belongs to the catalase family. As to quaternary structure, homotetramer. Interacts (via microbody targeting signal) with PEX5, monomeric form interacts with PEX5, leading to its translocation into peroxisomes. Heme serves as cofactor. It depends on NADP(+) as a cofactor. In terms of tissue distribution, expressed in renal proximal tubules (at protein level).

Its subcellular location is the peroxisome matrix. It catalyses the reaction 2 H2O2 = O2 + 2 H2O. Catalyzes the degradation of hydrogen peroxide (H(2)O(2)) generated by peroxisomal oxidases to water and oxygen, thereby protecting cells from the toxic effects of hydrogen peroxide. Promotes growth of cells including T-cells, B-cells, myeloid leukemia cells, melanoma cells, mastocytoma cells and normal and transformed fibroblast cells. The sequence is that of Catalase (Cat) from Rattus norvegicus (Rat).